The primary structure comprises 141 residues: Sigma factor binding protein 2, chloroplastic (141 aa).

Residues 1 to 20 show a composition bias toward polar residues; sequence MDQSSSTLLINQRKSSSSPT. The tract at residues 1–36 is disordered; the sequence is MDQSSSTLLINQRKSSSSPTRIPPKQKRKSTTTHKP. The transit peptide at 1 to 38 directs the protein to the chloroplast; that stretch reads MDQSSSTLLINQRKSSSSPTRIPPKQKRKSTTTHKPIK. Positions 13-29 match the Bipartite nuclear localization signal motif; that stretch reads RKSSSSPTRIPPKQKRK. Residues 24-36 show a composition bias toward basic residues; the sequence is PKQKRKSTTTHKP. A VQ motif is present at residues 55–64; sequence FRELVQELTG.

In terms of assembly, interacts with sigma factors in chloroplast. Interacts with WRKY33 in the nucleus.

The protein localises to the plastid. The protein resides in the chloroplast. It is found in the nucleus. In terms of biological role, functions as activator of WRKY33 in plant defense against necrotrophic pathogens by stimulating the DNA-binding activity of WRKY33. The protein is Sigma factor binding protein 2, chloroplastic (SIB2) of Arabidopsis thaliana (Mouse-ear cress).